The chain runs to 98 residues: Small ribosomal subunit protein uS19 (98 aa).

Residues 77 to 98 (TRTYRGHAGGKAEKGGAAPKRK) form a disordered region.

It belongs to the universal ribosomal protein uS19 family.

In terms of biological role, protein S19 forms a complex with S13 that binds strongly to the 16S ribosomal RNA. This Chlorobium phaeovibrioides (strain DSM 265 / 1930) (Prosthecochloris vibrioformis (strain DSM 265)) protein is Small ribosomal subunit protein uS19.